The sequence spans 360 residues: Histidinol-phosphate aminotransferase (360 aa).

K218 is modified (N6-(pyridoxal phosphate)lysine).

It belongs to the class-II pyridoxal-phosphate-dependent aminotransferase family. Histidinol-phosphate aminotransferase subfamily. Homodimer. Pyridoxal 5'-phosphate is required as a cofactor.

It carries out the reaction L-histidinol phosphate + 2-oxoglutarate = 3-(imidazol-4-yl)-2-oxopropyl phosphate + L-glutamate. It functions in the pathway amino-acid biosynthesis; L-histidine biosynthesis; L-histidine from 5-phospho-alpha-D-ribose 1-diphosphate: step 7/9. The protein is Histidinol-phosphate aminotransferase of Chlorobium phaeovibrioides (strain DSM 265 / 1930) (Prosthecochloris vibrioformis (strain DSM 265)).